Consider the following 103-residue polypeptide: UPF0473 protein SSA_2239 (103 aa).

Belongs to the UPF0473 family.

The sequence is that of UPF0473 protein SSA_2239 from Streptococcus sanguinis (strain SK36).